Reading from the N-terminus, the 20-residue chain is Cruzioseptin-15 (20 aa).

Expressed by the skin glands.

The protein resides in the secreted. Its function is as follows. Has antimicrobial activity. The sequence is that of Cruzioseptin-15 from Cruziohyla calcarifer (Splendid leaf frog).